The chain runs to 426 residues: Cytochrome c biogenesis protein CcsB (426 aa).

The next 3 membrane-spanning stretches (helical) occupy residues 14 to 34 (LKIA…GTLI), 72 to 92 (SFWF…CSFR), and 162 to 182 (LGPI…TYGS).

Belongs to the Ccs1/CcsB family. May interact with CcsA.

It localises to the cellular thylakoid membrane. In terms of biological role, required during biogenesis of c-type cytochromes (cytochrome c6 and cytochrome f) at the step of heme attachment. In Prochlorococcus marinus (strain NATL2A), this protein is Cytochrome c biogenesis protein CcsB.